Reading from the N-terminus, the 215-residue chain is Probable phosphoglycerate mutase GpmB (215 aa).

Residues 8–15 (RHGETQWN), 21–22 (QG), arginine 58, arginine 60, 82–85 (ELDM), 104–105 (RR), and 151–152 (GI) contribute to the substrate site. The active-site Tele-phosphohistidine intermediate is the histidine 9. The active-site Proton donor/acceptor is the glutamate 82.

Belongs to the phosphoglycerate mutase family. GpmB subfamily.

It catalyses the reaction (2R)-2-phosphoglycerate = (2R)-3-phosphoglycerate. It participates in carbohydrate degradation; glycolysis; pyruvate from D-glyceraldehyde 3-phosphate: step 3/5. The chain is Probable phosphoglycerate mutase GpmB from Klebsiella pneumoniae (strain 342).